The sequence spans 72 residues: uncharacterized protein (72 aa).

At 1–12 (MSKHKHEWTESV) the chain is on the cytoplasmic side. Residues 13–32 (ANSGPASILSYCASSILMTV) traverse the membrane as a helical segment. At 33–46 (TNKFVVNLDNFNMN) the chain is on the lumenal side. The chain crosses the membrane as a helical span at residues 47-69 (FVMLFVQSLVCTVTLCILRIVGV). The Cytoplasmic segment spans residues 70-72 (ANF).

The protein belongs to the TPT transporter family. SLC35D subfamily.

The protein resides in the membrane. This is an uncharacterized protein from Saccharomyces cerevisiae (strain RM11-1a) (Baker's yeast).